Reading from the N-terminus, the 92-residue chain is Small ribosomal subunit protein uS17 (92 aa).

The protein belongs to the universal ribosomal protein uS17 family. Part of the 30S ribosomal subunit.

Its function is as follows. One of the primary rRNA binding proteins, it binds specifically to the 5'-end of 16S ribosomal RNA. In Cupriavidus necator (strain ATCC 17699 / DSM 428 / KCTC 22496 / NCIMB 10442 / H16 / Stanier 337) (Ralstonia eutropha), this protein is Small ribosomal subunit protein uS17.